Here is a 154-residue protein sequence, read N- to C-terminus: Hexachlorocyclohexane dehydrochlorinase 1 (154 aa).

Asp-25 is an active-site residue. His-73 serves as the catalytic Proton acceptor.

This sequence belongs to the HCH dehydrochlorinase family. As to quaternary structure, homotrimer.

It localises to the periplasm. The enzyme catalyses gamma-hexachlorocyclohexane = (3R,4S,5S,6R)-pentachlorocyclohexene + chloride + H(+). The catalysed reaction is (3R,4S,5S,6R)-pentachlorocyclohexene = (3R,6R)-1,3,4,6-tetrachlorocyclohexa-1,4-diene + chloride + H(+). Its pathway is xenobiotic degradation; hexachlorocyclohexane degradation. Catalyzes the conversion of the important environmental pollutant gamma-hexachlorocyclohexane (gamma-HCH or lindane) to 1,3,4,6-tetrachloro-1,4-cyclohexadiene (1,4-TCDN) via gamma-pentachlorocyclohexene (gamma-PCCH). Proceeds by two successive 1,2-anti conformationally dependent dehydrochlorinations. Also shows activity with alpha- and delta-HCH, giving alpha- and delta-PCCH respectively, but not with the beta isomer. The polypeptide is Hexachlorocyclohexane dehydrochlorinase 1 (Sphingobium indicum (strain DSM 16412 / CCM 7286 / MTCC 6364 / B90A)).